Consider the following 355-residue polypeptide: Cyanide hydratase (355 aa).

One can recognise a CN hydrolase domain in the interval 6 to 286 (YKAAAVTSEP…GLLFVDIDLN (281 aa)). The active-site Proton acceptor is Glu46. The active site involves Lys128. The active-site Nucleophile is the Cys163.

The protein belongs to the carbon-nitrogen hydrolase superfamily. Nitrilase family. In terms of assembly, oligomer of dimers, forming left-handed helical fibers.

The enzyme catalyses formamide = hydrogen cyanide + H2O. In terms of biological role, catalyzes the hydration of cyanide to formamide. Degradation of cyanide may be important for plant pathogenic fungi in infection of cyanogenic plants. Also has low but significant nitrilase activity with acetonitrile, propionitrile and benzonitrile. The sequence is that of Cyanide hydratase from Gibberella baccata (Fusarium lateritium).